The chain runs to 159 residues: Succinate dehydrogenase assembly factor 2, mitochondrial (159 aa).

The N-terminal 14 residues, 1-14 (MASFCLSRCCALRG), are a transit peptide targeting the mitochondrion.

It belongs to the SDHAF2 family. In terms of assembly, interacts with the flavoprotein subunit within the SDH catalytic dimer.

The protein resides in the mitochondrion matrix. Its function is as follows. Plays an essential role in the assembly of succinate dehydrogenase (SDH), an enzyme complex (also referred to as respiratory complex II) that is a component of both the tricarboxylic acid (TCA) cycle and the mitochondrial electron transport chain, and which couples the oxidation of succinate to fumarate with the reduction of ubiquinone (coenzyme Q) to ubiquinol. Required for flavinylation (covalent attachment of FAD) of the flavoprotein subunit of the SDH catalytic dimer. The chain is Succinate dehydrogenase assembly factor 2, mitochondrial from Culex quinquefasciatus (Southern house mosquito).